The following is a 340-amino-acid chain: Anthranilate phosphoribosyltransferase (340 aa).

Residues Gly80, 83-84, Thr88, 90-93, 108-116, and Ser120 contribute to the 5-phospho-alpha-D-ribose 1-diphosphate site; these read GD, NIST, and KHGNRAMSS. Anthranilate is bound at residue Gly80. Ser92 lines the Mg(2+) pocket. Asn111 is a binding site for anthranilate. An anthranilate-binding site is contributed by Arg166. Residues Asp225 and Glu226 each coordinate Mg(2+).

It belongs to the anthranilate phosphoribosyltransferase family. Homodimer. Mg(2+) serves as cofactor.

The catalysed reaction is N-(5-phospho-beta-D-ribosyl)anthranilate + diphosphate = 5-phospho-alpha-D-ribose 1-diphosphate + anthranilate. It functions in the pathway amino-acid biosynthesis; L-tryptophan biosynthesis; L-tryptophan from chorismate: step 2/5. Its function is as follows. Catalyzes the transfer of the phosphoribosyl group of 5-phosphorylribose-1-pyrophosphate (PRPP) to anthranilate to yield N-(5'-phosphoribosyl)-anthranilate (PRA). The chain is Anthranilate phosphoribosyltransferase from Roseiflexus castenholzii (strain DSM 13941 / HLO8).